A 944-amino-acid polypeptide reads, in one-letter code: UvrABC system protein A (944 aa).

33–40 is an ATP binding site; that stretch reads GLSGSGKS. The C4-type zinc-finger motif lies at 252–279; the sequence is CPICGFSIGELEPRMFSFNSPFGACPTC. 2 ABC transporter domains span residues 309–587 and 607–935; these read WEPT…KKSL and ITDR…QYLK. 639–646 is a binding site for ATP; the sequence is GVSGSGKS. Residues 738–764 form a C4-type zinc finger; the sequence is CEACKGDGIIKIEMHFLPDVYVPCEVC.

It belongs to the ABC transporter superfamily. UvrA family. In terms of assembly, forms a heterotetramer with UvrB during the search for lesions.

Its subcellular location is the cytoplasm. In terms of biological role, the UvrABC repair system catalyzes the recognition and processing of DNA lesions. UvrA is an ATPase and a DNA-binding protein. A damage recognition complex composed of 2 UvrA and 2 UvrB subunits scans DNA for abnormalities. When the presence of a lesion has been verified by UvrB, the UvrA molecules dissociate. This chain is UvrABC system protein A, found in Staphylococcus epidermidis (strain ATCC 12228 / FDA PCI 1200).